The sequence spans 1113 residues: Protein KIBRA (1113 aa).

WW domains lie at 6-39 (LPLP…DPRD) and 53-86 (DELP…DPRV). Coiled coils occupy residues 107-193 (LSAQ…RGFQ) and 293-431 (NSNN…SSMQ). Residue Ser141 is modified to Phosphoserine. Disordered stretches follow at residues 429–448 (SMQS…SRGS) and 522–547 (RSLS…SPPC). Positions 522-532 (RSLSGTPKSMT) are enriched in polar residues. Positions 533–542 (SLSPRSSLSS) are enriched in low complexity. Ser535 is modified (phosphoserine). Position 542 is a phosphoserine; by CDK1 (Ser542). The region spanning 658–781 (GATRIQIALK…RSGERSTRWY (124 aa)) is the C2 domain. Positions 825–975 (LEKRQEGRSS…RSVRMKRPSS (151 aa)) are disordered. The segment at 839–1113 (EDSWRYEETS…NIPALSADDV (275 aa)) is interaction with histone H3. The segment covering 847–870 (TSENEAVAEEEEEEVEEEEGEEDV) has biased composition (acidic residues). Phosphoserine is present on Ser899. Thr912 carries the post-translational modification Phosphothreonine. The segment covering 924-938 (IIRSKTFSPGPQSQY) has biased composition (polar residues). A Phosphoserine modification is found at Ser927. Thr929 is subject to Phosphothreonine. Ser931 carries the post-translational modification Phosphoserine; by CDK1. Phosphoserine is present on Ser947. 2 interaction with PRKCZ regions span residues 953-996 (SKKP…LDLQ) and 956-975 (PPFV…RPSS). A phosphoserine; by PKC/PRKCZ mark is found at Ser975 and Ser978. Residues 1001-1032 (WHSQLTQEISVLKELKEQLEQAKSHGEKELPQ) adopt a coiled-coil conformation. Positions 1111 to 1113 (DDV) match the ADDV motif motif.

The protein belongs to the WWC family. KIBRA subfamily. In terms of assembly, homodimer. Forms heterodimers with WWC2 and WWC3. Interacts with DDN. Interacts with DYNLL1 and histone H3. The interaction with DYNLL1 is mandatory for the recruitment and transactivation functions of ESR1 or DYNLL1 to the target chromatin and the interaction with histone H3 ensures proper regulatory interaction of WWC1-DYNLL1-ESR1 complexes with target chromatin. Interacts (via WW domains) with DDR1 (via PPxY motif) in a collagen-regulated manner. Interacts with PRKCZ (via the protein kinase domain). Forms a tripartite complex with DDR1 and PRKCZ, but predominantly in the absence of collagen. Interacts (via the ADDV motif) with PATJ (via PDZ domain 8). Interacts (via WW domains) with SYNPO (via PPxY motifs). Interacts with NF2 and SNX4. Interacts with DLC1 and PRKCZ. Interacts (via WW domains) with LATS1 and LATS2. Phosphorylation at Ser-542 and Ser-931 by CDK1 in response to spindle damage stress regulates mitotic exit, these two sites are dephosphorylated by CDC14B. In terms of tissue distribution, expressed in mammary epithelial cells and breast cancer cell lines. Found in the luminal epithelium surrounding the ducts in the normal breast. In the brain, expressed in somatodendritic compartment of neurons in the cortex and hippocampus and in the cerebellum it is found in the Purkinje cells and some granule cells (at protein level). Detected in brain, heart, colon and kidney. In the kidney, expressed in glomerular podocytes, in some tubules and in the collecting duct.

The protein resides in the cytoplasm. Its subcellular location is the perinuclear region. It is found in the nucleus. It localises to the cell projection. The protein localises to the ruffle membrane. The protein resides in the cytosol. In terms of biological role, regulator of the Hippo signaling pathway, also known as the Salvador-Warts-Hippo (SWH) pathway. Enhances phosphorylation of LATS1 and YAP1 and negatively regulates cell proliferation and organ growth due to a suppression of the transcriptional activity of YAP1, the major effector of the Hippo pathway. Along with NF2 can synergistically induce the phosphorylation of LATS1 and LATS2 and function in the regulation of Hippo signaling pathway. Acts as a transcriptional coactivator of ESR1 which plays an essential role in DYNLL1-mediated ESR1 transactivation. Regulates collagen-stimulated activation of the ERK/MAPK cascade. Modulates directional migration of podocytes. Plays a role in cognition and memory performance. Plays an important role in regulating AMPA-selective glutamate receptors (AMPARs) trafficking underlying synaptic plasticity and learning. The polypeptide is Protein KIBRA (Homo sapiens (Human)).